A 1007-amino-acid chain; its full sequence is Probable beta-galactosidase A (1007 aa).

The signal sequence occupies residues 1–18 (MKLSSACAIALLAAQAAG). Substrate contacts are provided by Y96, N140, A141, and E142. N156 carries N-linked (GlcNAc...) asparagine glycosylation. A substrate-binding site is contributed by N199. E200 functions as the Proton donor in the catalytic mechanism. A disulfide bond links C205 and C206. Y260 lines the substrate pocket. C266 and C315 are disulfide-bonded. The active-site Nucleophile is the E298. Substrate is bound at residue Y364. 10 N-linked (GlcNAc...) asparagine glycosylation sites follow: N373, N402, N422, N478, N522, N622, N739, N760, N777, and N805. Residues 862–881 (RQGFHQPEPPSQDWKSSSPL) form a disordered region. N-linked (GlcNAc...) asparagine glycosylation occurs at N914.

The protein belongs to the glycosyl hydrolase 35 family.

The protein localises to the secreted. It carries out the reaction Hydrolysis of terminal non-reducing beta-D-galactose residues in beta-D-galactosides.. Its function is as follows. Cleaves beta-linked terminal galactosyl residues from gangliosides, glycoproteins, and glycosaminoglycans. The chain is Probable beta-galactosidase A (lacA) from Aspergillus phoenicis (Aspergillus saitoi).